The sequence spans 517 residues: MLSRLMSGSSRSLEREYSCTVRLLDDSEYTCTIQRDAKGQYLFDLLCHHLNLLEKDYFGIRFVDPDKQRHWLEFTKSVVKQLRSQPPFTMCFRVKFYPADPAALKEEITRYLVFLQIKRDLYHGRLLCKTSDAALLAAYILQAEIGDYDPGKHPEGYSSKFQFFPKHSEKLEKKIAEIHKTELSGQTPATSELNFLRKAQTLETYGVDPHPCKDVSGNAAFLAFTPFGFVVLQGNKRVHFIKWNEVTKLKFEGKTFYLYVSQKEEKKIILTYFAPTPEACKHLWKCGIENQAFYKLEKSSQVRTVSSSNLFFKGSRFRYSGRVAKEVMESSAKIKREPPEIHRAGMVPSRSCPSITHGPRLSSVPRTRRRAVHISIMEGLESLRDSAHSTPVRSSSHGDTFLPHVRSSRADSNERVAVIADEAYSPADSVLPTPVAEHSLELMLLSRQINGATCSIEEEKESEASTPTATEAEALGGELRALCQGHGGSEQEQRVHLKGPQLQQQQWKGWGKSVPLD.

The FERM domain maps to Tyr17–Lys298. An interaction with ROCK1 region spans residues Ser308–Pro353. The disordered stretch occupies residues Ala344–Thr367. Position 375 is a phosphoserine (Ser375). 2 disordered regions span residues Asp385 to Ser408 and Gly485 to Asp517. Residues His388 to Gly398 show a composition bias toward polar residues. Positions Lys498–Asp517 are enriched in low complexity.

Interacts with CTNND1, ITGB5 (via cytoplasmic domain) and ROCK1.

It is found in the cell junction. Its subcellular location is the adherens junction. May be involved in regulation of cell migration. May regulate cell-matrix interactions via its interaction with ITGB5 and modifying ITGB5 cytoplasmic tail interactions such as with FERMT2 and TLN1. May regulate ROCK1 kinase activity possibly involved in regulation of actin stress fiber formation. This chain is FERM domain-containing protein 5 (Frmd5), found in Mus musculus (Mouse).